A 287-amino-acid chain; its full sequence is ATP synthase gamma chain (287 aa).

This sequence belongs to the ATPase gamma chain family. F-type ATPases have 2 components, CF(1) - the catalytic core - and CF(0) - the membrane proton channel. CF(1) has five subunits: alpha(3), beta(3), gamma(1), delta(1), epsilon(1). CF(0) has three main subunits: a, b and c.

The protein localises to the cell inner membrane. Produces ATP from ADP in the presence of a proton gradient across the membrane. The gamma chain is believed to be important in regulating ATPase activity and the flow of protons through the CF(0) complex. This chain is ATP synthase gamma chain, found in Enterobacter sp. (strain 638).